The sequence spans 196 residues: Homeobox protein ANF-1 (196 aa).

The homeobox DNA-binding region spans 119–178 (GRRPRTAFTRNQIEVLENVFKMNSYPGIDIREELARKLDLEEDRIQIWFQNRRAKLKRSH).

It belongs to the ANF homeobox family.

It is found in the nucleus. In terms of biological role, may be involved in the early patterning of the most anterior region of the main embryonic body axis. The protein is Homeobox protein ANF-1 of Gallus gallus (Chicken).